The following is a 570-amino-acid chain: Adenine deaminase (570 aa).

The protein belongs to the metallo-dependent hydrolases superfamily. Adenine deaminase family. Mn(2+) serves as cofactor.

The enzyme catalyses adenine + H2O + H(+) = hypoxanthine + NH4(+). This chain is Adenine deaminase, found in Oleidesulfovibrio alaskensis (strain ATCC BAA-1058 / DSM 17464 / G20) (Desulfovibrio alaskensis).